Reading from the N-terminus, the 385-residue chain is Na(+)/H(+) antiporter NhaA (385 aa).

Transmembrane regions (helical) follow at residues 9-29 (YSAI…NVLD), 45-65 (IFGL…VFFF), 87-107 (IIPG…YLSV), 114-134 (GWPV…AIFG), 155-175 (AGIV…WIIV), 198-218 (TFLI…SVYQ), 220-235 (GIHA…IMLN), 245-265 (ALEP…AAMV), 282-302 (ILLG…IIAL), 312-332 (FFNL…SLLM), and 345-365 (QGVI…IILM).

The protein belongs to the NhaA Na(+)/H(+) (TC 2.A.33) antiporter family.

It is found in the cell membrane. The enzyme catalyses Na(+)(in) + 2 H(+)(out) = Na(+)(out) + 2 H(+)(in). Na(+)/H(+) antiporter that extrudes sodium in exchange for external protons. This chain is Na(+)/H(+) antiporter NhaA, found in Tropheryma whipplei (strain Twist) (Whipple's bacillus).